We begin with the raw amino-acid sequence, 172 residues long: Scytalone dehydratase (172 aa).

The substrate site is built by Tyr-30, Tyr-50, and Phe-53. Residues His-85 and His-110 contribute to the active site. Asn-131 is a binding site for substrate.

Belongs to the scytalone dehydratase family. Homotrimer. Each subunit contains an active site, located in the central part of the hydrophobic core of the monomer, which functions independently.

It localises to the endosome. The enzyme catalyses scytalone = 1,3,8-trihydroxynaphthalene + H2O. It functions in the pathway pigment biosynthesis; melanin biosynthesis. With respect to regulation, (N-phenoxypropyl)-carboxamides such as carpropamid and derivatives of norephedrine act as inhibitors of scytalone dehydratase activity. Scytalone dehydratase; part of the gene cluster that mediates the biosynthesis of dihydroxynaphthalene melanin, a bluish-green pigment and a structural component of the conidial wall. Within the pathway, catalyzes the dehydration of scytalone as well as of vermelone. Is also able to dehydrate the alternate substrate 2,3-dihydro-2,5-dihydroxy-4H-benzopyran-4-one (DDBO) to 5-hydroxy-4H-1-benzopyran-4-one (HBO). This Pyricularia oryzae (strain 70-15 / ATCC MYA-4617 / FGSC 8958) (Rice blast fungus) protein is Scytalone dehydratase (SDH1).